Consider the following 477-residue polypeptide: Delayed-rectifier potassium channel regulatory subunit KCNS2 (477 aa).

Residues 1–184 (MTGQSLWDVS…LALDNPGYSV (184 aa)) are Cytoplasmic-facing. The helical transmembrane segment at 185-206 (LSRVFSILSILVVMGSIITMCL) threads the bilayer. At 207–225 (NSLPDFQIPDSQGNPGEDP) the chain is on the extracellular side. Residues 226-248 (RFEIVEHFGIAWFTFELVARFAV) form a helical membrane-spanning segment. Residues 249–259 (APDFLKFFKNA) are Cytoplasmic-facing. The helical transmembrane segment at 260 to 280 (LNLIDLMSIVPFYITLVVNLV) threads the bilayer. The Extracellular segment spans residues 281–290 (VESTPTLANL). A helical; Voltage-sensor transmembrane segment spans residues 291-311 (GRVAQVLRLMRIFRILKLARH). Topologically, residues 312 to 326 (STGLRSLGATLKYSY) are cytoplasmic. A helical transmembrane segment spans residues 327–348 (KEVGLLLLYLSVGISIFSVVAY). The Extracellular portion of the chain corresponds to 349–361 (TIEKEENEGLATI). Positions 362–373 (PACWWWATVSMT) form an intramembrane region, helical. Positions 374–379 (TVGYGD) match the Selectivity filter motif. The stretch at 374–381 (TVGYGDVV) is an intramembrane region. The Extracellular portion of the chain corresponds to 382-388 (PGTTAGK). Residues 389–417 (LTASACILAGILVVVLPITLIFNKFSHFY) form a helical membrane-spanning segment. At 418-477 (RRQKQLESAMRSCDFGDGMKEVPSVNLRDYYAHKVKSLMASLTNMSRSSPSELSLNDSLR) the chain is on the cytoplasmic side.

The protein belongs to the potassium channel family. S (TC 1.A.1.2) subfamily. Kv9.2/KCNS2 sub-subfamily. Heterotetramer with KCNB1 and KCNB2. Does not form homomultimers.

The protein resides in the cell membrane. Functionally, potassium channel regulatory subunit that modulate the delayed rectifier voltage-gated potassium channel activity of KCNB1 and KCNB2 by altering their kinetics, expression levels, and shifting the half-inactivation potential to more polarized values. While it does not form functional channels on its own, it can form functional heterotetrameric channels with KCNB1 and KCNB2. Each regulatory subunit has unique regulatory properties that can lead to extensive inhibition, significant changes in kinetics, and/or substantial shifts in the voltage dependencies of the inactivation process. This chain is Delayed-rectifier potassium channel regulatory subunit KCNS2, found in Homo sapiens (Human).